Here is a 139-residue protein sequence, read N- to C-terminus: Large ribosomal subunit protein uL16 (139 aa).

The protein belongs to the universal ribosomal protein uL16 family. As to quaternary structure, part of the 50S ribosomal subunit.

Functionally, binds 23S rRNA and is also seen to make contacts with the A and possibly P site tRNAs. The sequence is that of Large ribosomal subunit protein uL16 from Chlorobium phaeobacteroides (strain DSM 266 / SMG 266 / 2430).